The chain runs to 626 residues: UvrABC system protein C (626 aa).

The GIY-YIG domain occupies 26–105; sequence QEPGVYFMGD…IKQHQPHFNV (80 aa). The 36-residue stretch at 215-250 folds into the UVR domain; sequence QELHQLLTQQMEKAAADLKFEQAALIRDQINSLGKL.

It belongs to the UvrC family. Interacts with UvrB in an incision complex.

It localises to the cytoplasm. Functionally, the UvrABC repair system catalyzes the recognition and processing of DNA lesions. UvrC both incises the 5' and 3' sides of the lesion. The N-terminal half is responsible for the 3' incision and the C-terminal half is responsible for the 5' incision. The protein is UvrABC system protein C of Synechocystis sp. (strain ATCC 27184 / PCC 6803 / Kazusa).